Reading from the N-terminus, the 245-residue chain is NAD-dependent protein deacylase (245 aa).

In terms of domain architecture, Deacetylase sirtuin-type spans 1–237 (MNFPYRNIVV…PKLVEELLAH (237 aa)). 13-32 (GAGISAESGIQTFRAQDGLW) is an NAD(+) binding site. The substrate site is built by tyrosine 57 and arginine 60. 94–97 (QNID) contributes to the NAD(+) binding site. Catalysis depends on histidine 112, which acts as the Proton acceptor. Cysteine 120 and cysteine 139 together coordinate Zn(2+). NAD(+) contacts are provided by residues 179–181 (GTS), 205–207 (NLE), and alanine 223.

The protein belongs to the sirtuin family. Class III subfamily. Requires Zn(2+) as cofactor.

The protein resides in the cytoplasm. It carries out the reaction N(6)-acetyl-L-lysyl-[protein] + NAD(+) + H2O = 2''-O-acetyl-ADP-D-ribose + nicotinamide + L-lysyl-[protein]. The enzyme catalyses N(6)-succinyl-L-lysyl-[protein] + NAD(+) + H2O = 2''-O-succinyl-ADP-D-ribose + nicotinamide + L-lysyl-[protein]. Its function is as follows. NAD-dependent lysine deacetylase and desuccinylase that specifically removes acetyl and succinyl groups on target proteins. Modulates the activities of several proteins which are inactive in their acylated form. This is NAD-dependent protein deacylase from Vibrio vulnificus (strain YJ016).